The chain runs to 317 residues: tRNA dimethylallyltransferase (317 aa).

19–26 lines the ATP pocket; sequence GPTASGKS. 21–26 serves as a coordination point for substrate; that stretch reads TASGKS. The interval 44–47 is interaction with substrate tRNA; the sequence is DSMQ.

Belongs to the IPP transferase family. Monomer. Requires Mg(2+) as cofactor.

The enzyme catalyses adenosine(37) in tRNA + dimethylallyl diphosphate = N(6)-dimethylallyladenosine(37) in tRNA + diphosphate. Catalyzes the transfer of a dimethylallyl group onto the adenine at position 37 in tRNAs that read codons beginning with uridine, leading to the formation of N6-(dimethylallyl)adenosine (i(6)A). In Methylorubrum populi (strain ATCC BAA-705 / NCIMB 13946 / BJ001) (Methylobacterium populi), this protein is tRNA dimethylallyltransferase.